The primary structure comprises 410 residues: FBD-associated F-box protein At5g38590 (410 aa).

One can recognise an F-box domain in the interval 1 to 47; the sequence is MDKINGLPDDLLVKILSYVPTDIAVSTSILSKRWEFLWMWLPNLDYT. One can recognise an FBD domain in the interval 335 to 385; that stretch reads GWNQPSSVPECLLSSLQIFKWPQYLGRPEDRDIAVYILKNARHLKKTTILA.

The chain is FBD-associated F-box protein At5g38590 from Arabidopsis thaliana (Mouse-ear cress).